We begin with the raw amino-acid sequence, 253 residues long: Triosephosphate isomerase (253 aa).

Residue 9–11 (NWK) coordinates substrate. His-95 functions as the Electrophile in the catalytic mechanism. The Proton acceptor role is filled by Glu-167. Substrate contacts are provided by residues Gly-173, Ser-213, and 234–235 (GG). Residue Ser-213 is modified to Phosphoserine.

This sequence belongs to the triosephosphate isomerase family. Homodimer.

It localises to the cytoplasm. The catalysed reaction is D-glyceraldehyde 3-phosphate = dihydroxyacetone phosphate. It functions in the pathway carbohydrate biosynthesis; gluconeogenesis. Its pathway is carbohydrate degradation; glycolysis; D-glyceraldehyde 3-phosphate from glycerone phosphate: step 1/1. Its function is as follows. Involved in the gluconeogenesis. Catalyzes stereospecifically the conversion of dihydroxyacetone phosphate (DHAP) to D-glyceraldehyde-3-phosphate (G3P). The protein is Triosephosphate isomerase of Bacillus subtilis (strain 168).